A 216-amino-acid chain; its full sequence is MTDHKPSKSLPKATAKRLPQYYRLFKSLVEENVTRTNSQLISEKIGVDAATIRRDFSLFGELGRRGYGYETKVLRDFFGELLGQDQETHIALIGVGNLGRALLHYQFQDRNKMRITQAYDISGNPLVGTQTDDGIPIYNISDLEKNVKKSDIKTAILSVRKENAQEVVDTLVKAGIKGFLNFAPIRLKVPSDVVVQSIDLTKELQTLLFFMGAQEE.

The segment at residues 20-59 (QYYRLFKSLVEENVTRTNSQLISEKIGVDAATIRRDFSLF) is a DNA-binding region (H-T-H motif). 94–99 (GVGNLG) contributes to the NAD(+) binding site.

It belongs to the transcriptional regulatory Rex family. In terms of assembly, homodimer.

The protein resides in the cytoplasm. In terms of biological role, modulates transcription in response to changes in cellular NADH/NAD(+) redox state. The polypeptide is Redox-sensing transcriptional repressor Rex (Lactococcus lactis subsp. cremoris (Streptococcus cremoris)).